We begin with the raw amino-acid sequence, 751 residues long: Phosphate transporter PHO1 homolog 8 (751 aa).

Positions 1–299 (MKFGKEYVAQ…LRNAAKLYME (299 aa)) constitute an SPX domain. The Cytoplasmic segment spans residues 1-351 (MKFGKEYVAQ…KVTKEKHRIT (351 aa)). The chain crosses the membrane as a helical span at residues 352–372 (FSTGFFVGCTVSLVIALGLFI). At 373–392 (HARNIMGAVGHKLYMETMFP) the chain is on the extracellular side. Residues 393–413 (LYSLFAFVVLHMIMYASNIYF) form a helical membrane-spanning segment. The Cytoplasmic portion of the chain corresponds to 414–434 (WKRYRVNYPFIFGFKEGTELG). Residues 435–455 (YGHVLLLSFGLGTLALCAVLV) traverse the membrane as a helical segment. Over 456–473 (NMDMEMDPNTNDYKTITE) the chain is Extracellular. A helical transmembrane segment spans residues 474–494 (LVPLFVVALVIAISVCPFNIF). At 495–623 (YRSSRFFFLM…FSINRGNDWK (129 aa)) the chain is on the cytoplasmic side. The region spanning 558 to 751 (KSSDVYSTFY…NYDEEEDRDS (194 aa)) is the EXS domain. Residues 624–644 (IAAWVFSGLATFYGTYWDIVY) form a helical membrane-spanning segment. Topologically, residues 645-667 (DWGLLHRPSKSWLREKLLVPHKS) are extracellular. The chain crosses the membrane as a helical span at residues 668–688 (VYYVAMVVNVVLRLAWLQTVL). The Cytoplasmic portion of the chain corresponds to 689 to 751 (DFNISFLHRE…NYDEEEDRDS (63 aa)).

The protein belongs to the SYG1 (TC 2.A.94) family. Expressed in root epidermis, leaf hydathodes, trichomes and petioles, stem vascular cylinder, receptacle, stigma apex and pollen grains.

The protein localises to the cell membrane. May transport inorganic phosphate (Pi). The sequence is that of Phosphate transporter PHO1 homolog 8 (PHO1-H8) from Arabidopsis thaliana (Mouse-ear cress).